Consider the following 253-residue polypeptide: Prepilin leader peptidase/N-methyltransferase (253 aa).

Residues Val-4–Ile-24 form a helical membrane-spanning segment. 4 residues coordinate Zn(2+): Cys-48, Cys-51, Cys-73, and Cys-76. The next 6 helical transmembrane spans lie at Ile-80 to Trp-100, Val-106 to Phe-126, Met-129 to Gln-149, Ile-159 to Phe-179, Thr-198 to Ile-218, and Cys-230 to Ile-250.

The protein belongs to the peptidase A24 family. Zn(2+) is required as a cofactor.

It localises to the cell inner membrane. It carries out the reaction Typically cleaves a -Gly-|-Phe- bond to release an N-terminal, basic peptide of 5-8 residues from type IV prepilin, and then N-methylates the new N-terminal amino group, the methyl donor being S-adenosyl-L-methionine.. Functionally, plays an essential role in type IV pili and type II pseudopili formation by proteolytically removing the leader sequence from substrate proteins and subsequently monomethylating the alpha-amino group of the newly exposed N-terminal phenylalanine. The chain is Prepilin leader peptidase/N-methyltransferase (tcpJ) from Vibrio cholerae serotype O1 (strain ATCC 39315 / El Tor Inaba N16961).